Consider the following 180-residue polypeptide: Large ribosomal subunit protein uL6 (180 aa).

Belongs to the universal ribosomal protein uL6 family. Part of the 50S ribosomal subunit.

In terms of biological role, this protein binds to the 23S rRNA, and is important in its secondary structure. It is located near the subunit interface in the base of the L7/L12 stalk, and near the tRNA binding site of the peptidyltransferase center. This chain is Large ribosomal subunit protein uL6, found in Thermoanaerobacter sp. (strain X514).